The chain runs to 341 residues: Protein arginine N-methyltransferase 1 (341 aa).

One can recognise an SAM-dependent MTase PRMT-type domain in the interval 20-315; sequence ADYYFDSYSH…DCAPFDKNQR (296 aa). The S-adenosyl-L-methionine site is built by histidine 33, arginine 42, glycine 66, aspartate 88, and glutamate 117. Residues glutamate 132 and glutamate 141 contribute to the active site.

It belongs to the class I-like SAM-binding methyltransferase superfamily. Protein arginine N-methyltransferase family.

The protein localises to the nucleus. It localises to the cytoplasm. The protein resides in the cytosol. It carries out the reaction L-arginyl-[protein] + 2 S-adenosyl-L-methionine = N(omega),N(omega)-dimethyl-L-arginyl-[protein] + 2 S-adenosyl-L-homocysteine + 2 H(+). The catalysed reaction is L-arginyl-[protein] + S-adenosyl-L-methionine = N(omega)-methyl-L-arginyl-[protein] + S-adenosyl-L-homocysteine + H(+). Arginine methyltransferase that methylates the guanidino nitrogens of arginyl residues present in proteins such as ribonucleoproteins and histones. The protein is Protein arginine N-methyltransferase 1 (prmt1) of Dictyostelium discoideum (Social amoeba).